The sequence spans 195 residues: MSRTKKTRRITDIMPARKTDKPKQPMPKLGGGKNRKLTRYELDAQAREEKRKRKHKGLPTGSRNADPAEQKKAVVKEVKDPRIGSRKKVPLMVEFVNQPEKGRTIKAVPVEPIKPTLSPEQELEQLENNECLNQLLDDLEAGKTLSAEDQKFMNECLDRIDELMTELGIEYEDEEGDNGDALLRQFETMDINKFR.

The tract at residues 1–81 (MSRTKKTRRI…KAVVKEVKDP (81 aa)) is disordered. Basic and acidic residues-rich tracts occupy residues 9-23 (RITD…DKPK), 38-49 (TRYELDAQAREE), and 66-81 (DPAE…VKDP).

The protein belongs to the YihI family. Interacts with Der.

A GTPase-activating protein (GAP) that modifies Der/EngA GTPase function. May play a role in ribosome biogenesis. This chain is Der GTPase-activating protein YihI, found in Mannheimia haemolytica (Pasteurella haemolytica).